The following is a 560-amino-acid chain: Chaperonin GroEL 2 (560 aa).

ATP contacts are provided by residues Thr29–Pro32, Asp86–Thr90, Gly413, and Asp492. The interval Asp520 to Met542 is disordered. Over residues Ala530–Met542 the composition is skewed to gly residues.

This sequence belongs to the chaperonin (HSP60) family. As to quaternary structure, forms a cylinder of 14 subunits composed of two heptameric rings stacked back-to-back. Interacts with the co-chaperonin GroES.

It is found in the cytoplasm. It carries out the reaction ATP + H2O + a folded polypeptide = ADP + phosphate + an unfolded polypeptide.. In terms of biological role, together with its co-chaperonin GroES, plays an essential role in assisting protein folding. The GroEL-GroES system forms a nano-cage that allows encapsulation of the non-native substrate proteins and provides a physical environment optimized to promote and accelerate protein folding. The sequence is that of Chaperonin GroEL 2 from Prochlorococcus marinus (strain NATL2A).